Here is a 308-residue protein sequence, read N- to C-terminus: Leucine-rich repeat-containing protein 59 (308 aa).

Over 1–248 the chain is Cytoplasmic; the sequence is MARANGRSQN…LARRQSRLRK (248 aa). 5 LRR repeats span residues 10–31, 40–61, 63–84, 86–107, and 109–128; these read NLRD…SEVP, KATA…FCNL, YIVR…FGRL, NLQH…FAQL, and SLKW…AKVA. Residues 154-223 adopt a coiled-coil conformation; the sequence is DHERELQRKL…NNNKKKAEEE (70 aa). 3 stretches are compositionally biased toward basic and acidic residues: residues 170–187, 194–203, and 218–237; these read KQRL…DREL, QQKERKRRDY, and KKAE…PKEK. The tract at residues 170–240 is disordered; that stretch reads KQRLEAQQRV…VPTPKEKKLA (71 aa). Residues 249 to 269 form a helical membrane-spanning segment; the sequence is IACILLFGLMVALLGVVACRF. At 270–308 the chain is on the lumenal side; that stretch reads TDLKTFEVCRSVNAVYKETLSALHSNPVLERFLQDPSSQ.

In terms of assembly, interacts with SGO1.

It localises to the microsome membrane. Its subcellular location is the endoplasmic reticulum membrane. It is found in the nucleus envelope. Its function is as follows. Required for nuclear import of FGF1. This chain is Leucine-rich repeat-containing protein 59 (lrrc59), found in Xenopus tropicalis (Western clawed frog).